We begin with the raw amino-acid sequence, 375 residues long: Queuine tRNA-ribosyltransferase (375 aa).

Residue Asp90 is the Proton acceptor of the active site. Substrate is bound by residues 90-94 (DSGGF), Asp144, Gln193, and Gly220. Residues 251–257 (GVGTPED) are RNA binding. Asp270 (nucleophile) is an active-site residue. The segment at 275-279 (TRNAR) is RNA binding; important for wobble base 34 recognition. Zn(2+) is bound by residues Cys308, Cys310, Cys313, and His339.

The protein belongs to the queuine tRNA-ribosyltransferase family. As to quaternary structure, homodimer. Within each dimer, one monomer is responsible for RNA recognition and catalysis, while the other monomer binds to the replacement base PreQ1. It depends on Zn(2+) as a cofactor.

The enzyme catalyses 7-aminomethyl-7-carbaguanine + guanosine(34) in tRNA = 7-aminomethyl-7-carbaguanosine(34) in tRNA + guanine. Its pathway is tRNA modification; tRNA-queuosine biosynthesis. In terms of biological role, catalyzes the base-exchange of a guanine (G) residue with the queuine precursor 7-aminomethyl-7-deazaguanine (PreQ1) at position 34 (anticodon wobble position) in tRNAs with GU(N) anticodons (tRNA-Asp, -Asn, -His and -Tyr). Catalysis occurs through a double-displacement mechanism. The nucleophile active site attacks the C1' of nucleotide 34 to detach the guanine base from the RNA, forming a covalent enzyme-RNA intermediate. The proton acceptor active site deprotonates the incoming PreQ1, allowing a nucleophilic attack on the C1' of the ribose to form the product. After dissociation, two additional enzymatic reactions on the tRNA convert PreQ1 to queuine (Q), resulting in the hypermodified nucleoside queuosine (7-(((4,5-cis-dihydroxy-2-cyclopenten-1-yl)amino)methyl)-7-deazaguanosine). This is Queuine tRNA-ribosyltransferase from Herminiimonas arsenicoxydans.